The sequence spans 213 residues: Thymidine kinase (213 aa).

ATP-binding positions include 22–29 and 94–97; these read GSMFSGKT and DEAQ. Residue E95 is the Proton acceptor of the active site. The Zn(2+) site is built by C151, C154, C183, and C186. Positions 185-213 are disordered; that stretch reads RCFQPPRPTSTSSLKAPAPAATAPRPELP. Positions 193-213 are enriched in low complexity; it reads TSTSSLKAPAPAATAPRPELP.

Belongs to the thymidine kinase family. In terms of assembly, homotetramer.

It is found in the cytoplasm. It carries out the reaction thymidine + ATP = dTMP + ADP + H(+). The sequence is that of Thymidine kinase from Rhodothermus sp. (strain ITI 518).